A 69-amino-acid chain; its full sequence is MASLFSTFRTQTFLYPAHTFIYPAHTFSHFGPAFFGQALHLFGPGLGLFERENAHCHIFDNRKTPPRLQ.

It is found in the mitochondrion. This is an uncharacterized protein from Marchantia polymorpha (Common liverwort).